The chain runs to 65 residues: Large ribosomal subunit protein bL35 (65 aa).

Positions 1–30 (MPKMKTNRGAAKRFRKTASGRFKSKQSHLR) are disordered. Positions 10–30 (AAKRFRKTASGRFKSKQSHLR) are enriched in basic residues.

The protein belongs to the bacterial ribosomal protein bL35 family.

The chain is Large ribosomal subunit protein bL35 from Pseudoalteromonas atlantica (strain T6c / ATCC BAA-1087).